The chain runs to 148 residues: Putative antiporter subunit mnhG2 (148 aa).

3 helical membrane-spanning segments follow: residues 11-31, 51-71, and 72-92; these read IAAIMIFLGSIIALISSIGLI, VLLTLVGVIIFFISSQGYLSV, and RLILALVFINLTSPVGGHLIS. Residues 125 to 148 are disordered; sequence EQLKQRAHEREERRRKTYEKEHDY. Basic and acidic residues predominate over residues 127–148; the sequence is LKQRAHEREERRRKTYEKEHDY.

This sequence belongs to the CPA3 antiporters (TC 2.A.63) subunit G family. In terms of assembly, may form a heterooligomeric complex that consists of seven subunits: mnhA2, mnhB2, mnhC2, mnhD2, mnhE2, mnhF2 and mnhG2.

Its subcellular location is the cell membrane. This Staphylococcus saprophyticus subsp. saprophyticus (strain ATCC 15305 / DSM 20229 / NCIMB 8711 / NCTC 7292 / S-41) protein is Putative antiporter subunit mnhG2 (mnhG2).